The primary structure comprises 203 residues: DNA-directed RNA polymerase subunit gamma (203 aa).

4 residues coordinate Zn(2+): C34, C36, C49, and C52.

It belongs to the RNA polymerase beta' chain family. RpoC1 subfamily. In cyanobacteria the RNAP catalytic core is composed of 2 alpha, 1 beta, 1 beta', 1 gamma and 1 omega subunit. When a sigma factor is associated with the core the holoenzyme is formed, which can initiate transcription. The cofactor is Zn(2+).

The catalysed reaction is RNA(n) + a ribonucleoside 5'-triphosphate = RNA(n+1) + diphosphate. Its function is as follows. DNA-dependent RNA polymerase catalyzes the transcription of DNA into RNA using the four ribonucleoside triphosphates as substrates. This Fischerella muscicola protein is DNA-directed RNA polymerase subunit gamma (rpoC1).